A 553-amino-acid polypeptide reads, in one-letter code: MALSKSMHARNRYKDKPPDFAYLASKYPDFKQHIQINLNGRVSLNFKDPEAVRALTCTLLREDFGLSIDIPLERLIPTVPLRLNYIHWVEDLIGHQDSDKTTLRRGIDIGTGASCIYPLLGATLNGWYFLATEVDDMCFNYAKKNVEQNNLSDLIKVVKVPQKTLLMDALKEESEIVYDFCMCNPPFFANQLEAKGVNSRNSRRPPPSSVNTGGITEIMAEGGELEFVKRIIHDSLQLKKRLRWYSCMLGKKCSLAPLKEELRIQGVPKVTFTEFCQGRTMRWALAWSFYDDVTVPSPPSKRRKLEKPRKPITFVVLESVMKELSLKASSLGSETAEGIVVVTTWIEKILTDLKVQHKRIPCGREEVSLFLTAIENSWIHLRRKRRERVRQLREVPRAPEDVILALEERKSTPKELSSGQDVAHSPQESALCGLDVPGGEAAADGGHCLSQKLLCQEETPEATEDERDEERGGMEAMESCKGSSNGAQDGEASEKGDRLDGAAGRYLFKCLVNIKKEAGDAVVEMHWVEGQNRDLMNQLCTYVRNQILRLVAS.

The segment at 17-20 (PPDF) is RNA-binding. S-adenosyl-L-methionine contacts are provided by Arg82, Gly110, Ser114, Glu133, Thr164, and Asn184. Residues 163 to 167 (KTLLM) form a K-loop region. RNA-binding stretches follow at residues 199-211 (SRNS…SSVN), 250-254 (GKKCS), and 277-283 (QGRTMRW). The VCR 1 stretch occupies residues 289-400 (FYDDVTVPSP…QLREVPRAPE (112 aa)). A phosphoserine mark is found at Ser329, Ser425, and Ser429. Residues 457-496 (EETPEATEDERDEERGGMEAMESCKGSSNGAQDGEASEKG) are disordered. Over residues 458–468 (ETPEATEDERD) the composition is skewed to acidic residues. The residue at position 463 (Thr463) is a Phosphothreonine. The VCR 2 stretch occupies residues 506–553 (YLFKCLVNIKKEAGDAVVEMHWVEGQNRDLMNQLCTYVRNQILRLVAS).

The protein belongs to the methyltransferase superfamily. METTL16/RlmF family. In terms of assembly, interacts with MEPCE. Interacts with LARP7.

Its subcellular location is the nucleus. The protein resides in the cytoplasm. It carries out the reaction adenosine in U6 snRNA + S-adenosyl-L-methionine = N(6)-methyladenosine in U6 snRNA + S-adenosyl-L-homocysteine + H(+). The catalysed reaction is an adenosine in mRNA + S-adenosyl-L-methionine = an N(6)-methyladenosine in mRNA + S-adenosyl-L-homocysteine + H(+). Its activity is regulated as follows. Methyltransferase activity is autoinhibited by the K-loop region that blocks S-adenosyl-L-methionine-binding. Upon activation, K-loop changes conformation, allowing S-adenosyl-L-methionine-binding and subsequent methyltransferase activity. mRNA N6-adenosine-methyltransferase activity is inhibited by zinc. Its function is as follows. RNA N6-methyltransferase that methylates adenosine residues at the N(6) position of a subset of RNAs and is involved in S-adenosyl-L-methionine homeostasis by regulating expression of MAT2A transcripts. Able to N6-methylate a subset of mRNAs and U6 small nuclear RNAs (U6 snRNAs). In contrast to the METTL3-METTL14 heterodimer, only able to methylate a limited number of RNAs: requires both a 5'UACAGAGAA-3' nonamer sequence and a specific RNA structure. Plays a key role in S-adenosyl-L-methionine homeostasis by mediating N6-methylation of MAT2A mRNAs, altering splicing of MAT2A transcripts: in presence of S-adenosyl-L-methionine, binds the 3'-UTR region of MAT2A mRNA and specifically N6-methylates the first hairpin of MAT2A mRNA, preventing recognition of their 3'-splice site by U2AF1/U2AF35, thereby inhibiting splicing and protein production of S-adenosylmethionine synthase. In S-adenosyl-L-methionine-limiting conditions, binds the 3'-UTR region of MAT2A mRNA but stalls due to the lack of a methyl donor, preventing N6-methylation and promoting expression of MAT2A. In addition to mRNAs, also able to mediate N6-methylation of U6 small nuclear RNA (U6 snRNA): specifically N6-methylates adenine in position 43 of U6 snRNAs. Also able to bind various lncRNAs, such as 7SK snRNA (7SK RNA) or 7SL RNA. Specifically binds the 3'-end of the MALAT1 long non-coding RNA. The protein is RNA N(6)-adenosine-methyltransferase METTL16 of Mus musculus (Mouse).